The sequence spans 158 residues: uncharacterized protein (158 aa).

Positions 1-16 (MFRPILILTILSCVLA) are cleaved as a signal peptide. Residue Asn-122 is glycosylated (N-linked (GlcNAc...) asparagine).

This is an uncharacterized protein from Caenorhabditis elegans.